A 304-amino-acid chain; its full sequence is Type II restriction enzyme LlaDCHI (304 aa).

Belongs to the DpnII type II restriction endonuclease family.

The enzyme catalyses Endonucleolytic cleavage of DNA to give specific double-stranded fragments with terminal 5'-phosphates.. A P subtype restriction enzyme that recognizes the double-stranded unmethylated sequence 5'-GATC-3' and cleaves before G-1. The polypeptide is Type II restriction enzyme LlaDCHI (llaDCHIR) (Lactococcus lactis subsp. cremoris (Streptococcus cremoris)).